An 88-amino-acid polypeptide reads, in one-letter code: Large ribosomal subunit protein bL27 (88 aa).

A disordered region spans residues 1–21 (MAHKKGVGSSRNGRDSQPKML).

The protein belongs to the bacterial ribosomal protein bL27 family.

The protein is Large ribosomal subunit protein bL27 of Pelotomaculum thermopropionicum (strain DSM 13744 / JCM 10971 / SI).